The following is a 68-amino-acid chain: Beta-defensin 1 (68 aa).

The N-terminal stretch at 1-21 (MRTSYLLLFTLCLLLSEIASG) is a signal peptide. Residues 22-32 (GNFLTGLGHRS) constitute a propeptide that is removed on maturation. Cystine bridges form between cysteine 37–cysteine 66, cysteine 44–cysteine 59, and cysteine 49–cysteine 67.

The protein belongs to the beta-defensin family. In terms of assembly, monomer. Homodimer.

The protein localises to the secreted. Its subcellular location is the membrane. Functionally, has bactericidal activity. May act as a ligand for C-C chemokine receptor CCR6. Positively regulates the sperm motility and bactericidal activity in a CCR6-dependent manner. Binds to CCR6 and triggers Ca2+ mobilization in the sperm which is important for its motility. This Gorilla gorilla gorilla (Western lowland gorilla) protein is Beta-defensin 1 (DEFB1).